The sequence spans 145 residues: Flagellar assembly factor FliW (145 aa).

The protein belongs to the FliW family. As to quaternary structure, interacts with translational regulator CsrA and flagellin(s).

The protein localises to the cytoplasm. Its function is as follows. Acts as an anti-CsrA protein, binds CsrA and prevents it from repressing translation of its target genes, one of which is flagellin. Binds to flagellin and participates in the assembly of the flagellum. The chain is Flagellar assembly factor FliW from Anoxybacillus flavithermus (strain DSM 21510 / WK1).